A 345-amino-acid polypeptide reads, in one-letter code: MNNEYKLTKFVQAAGCAAKMGPGDLKQTICHLTPDDERILVGFDTSEDASVYQINESQAIVQTLDFITPVVDDPYIYGQIAAANALSDVFAMGAEVKTAMNIVGFDRKNIPKDALEMILDGGNSKIKECGGVLLGGHTIESPEMYYGLSVTGMIHPNEIIRNNTPKIGHVLVLTKPIGMGILTTAIKRDLLELNLIKDCAKIMASLNYLPSKMMRKYEVSSCTDITGFGLMGHALECTNNSITLNISHNDVPFVKEAFDFASNDVIPGGTRRNMKYVEDKIEFLPNVSDIYKALLCDAQTSGGLLIAMKKDDAKEFIKELEDYSFGYASIIGEVIPRTHKAIIIN.

Cys16 is a catalytic residue. Residues Lys19 and 45 to 47 (TSE) contribute to the ATP site. Asp48 lines the Mg(2+) pocket. ATP is bound by residues Asp65, Asp88, and 136-138 (GHT). Asp88 contacts Mg(2+). A Mg(2+)-binding site is contributed by Asp224.

It belongs to the selenophosphate synthase 1 family. Class I subfamily. As to quaternary structure, homodimer. Mg(2+) is required as a cofactor.

The enzyme catalyses hydrogenselenide + ATP + H2O = selenophosphate + AMP + phosphate + 2 H(+). Functionally, synthesizes selenophosphate from selenide and ATP. The sequence is that of Selenide, water dikinase from Aliarcobacter butzleri (strain RM4018) (Arcobacter butzleri).